A 1649-amino-acid chain; its full sequence is DNA-directed RNA polymerase subunit beta' (1649 aa).

Residues Cys63, Cys65, Cys78, and Cys81 each coordinate Zn(2+). Mg(2+) contacts are provided by Asp747, Asp749, and Asp751. Cys1078, Cys1269, Cys1276, and Cys1279 together coordinate Zn(2+).

It belongs to the RNA polymerase beta' chain family. The RNAP catalytic core consists of 2 alpha, 1 beta, 1 beta' and 1 omega subunit. When a sigma factor is associated with the core the holoenzyme is formed, which can initiate transcription. Mg(2+) serves as cofactor. Zn(2+) is required as a cofactor.

It carries out the reaction RNA(n) + a ribonucleoside 5'-triphosphate = RNA(n+1) + diphosphate. Functionally, DNA-dependent RNA polymerase catalyzes the transcription of DNA into RNA using the four ribonucleoside triphosphates as substrates. The sequence is that of DNA-directed RNA polymerase subunit beta' from Thermosipho melanesiensis (strain DSM 12029 / CIP 104789 / BI429).